We begin with the raw amino-acid sequence, 483 residues long: Salicylaldehyde dehydrogenase (483 aa).

228–233 (GSTRVG) lines the NAD(+) pocket. Active-site residues include E250 and C284.

This sequence belongs to the aldehyde dehydrogenase family.

The catalysed reaction is salicylaldehyde + NAD(+) + H2O = salicylate + NADH + 2 H(+). It participates in aromatic compound metabolism; naphthalene degradation. The polypeptide is Salicylaldehyde dehydrogenase (nahF) (Pseudomonas putida (Arthrobacter siderocapsulatus)).